Here is a 194-residue protein sequence, read N- to C-terminus: Large ribosomal subunit protein uL18 (194 aa).

This sequence belongs to the universal ribosomal protein uL18 family. As to quaternary structure, part of the 50S ribosomal subunit. Contacts the 5S and 23S rRNAs.

In terms of biological role, this is one of the proteins that bind and probably mediate the attachment of the 5S RNA into the large ribosomal subunit, where it forms part of the central protuberance. The sequence is that of Large ribosomal subunit protein uL18 from Methanococcus aeolicus (strain ATCC BAA-1280 / DSM 17508 / OCM 812 / Nankai-3).